The following is a 1258-amino-acid chain: MILQSTSLFCKYINNCRYINREIVATLKASPQGLARIKQARSDRGWSVDDFRWLELASEILGVCWQENGVLAAGISEGTWKRFLAGKQAINAEAFKAYCQVLGLNWEEVQEGGRTKERKDTGTSRQEKFLSSSHPHTDWGEAPDVSIFYGRSEELDTVKRWVTQENCRLITLLGMGGIGKTTLSVKLAQEIINSEKIYLSQSPEYIIWRSLRNAPPVEDILAELIQFLSGQQETNLSNHLQGRISLLLKNLRSSRCLIILDNAESILQAGDRNGRYRAGCEGYGQFLQCIAETSHQSCLILTSREKPQGLAKYEGDSLPVRSLPLTGLQEQEGRELFNVKGKFAASCDQWQVLISRYGGNPLALKIVASSIRDFFDGDVSQFLEVSQQGTFIFDDIRDLLDQQFQRLTTLEREIMYWLAINREPVTLAELQADFVANIPPRELLESLSSLQRRSLIEKSAGGFTQQPVVMEYVSNHLIEQVCEEMREWGLVRSRGAEEQRSRGEKIHTQYKLNAALPLTALSTPLFTTHALIKAQAKDYVRESQISLILQPLINQLITEFGSLENISNCLVHILSRLRGKSPQETGYAGGNVLNLLHHAQVDLSGYDFSGLTVWQAYLQGVNLHDVDFANSDLSCCVFTETLGNILSAAFSPEGQLLATCDTDCHVRVWEVKSGKLLLICRGHSNWVRFVVFSPDGEILASCGADENVKLWSVRDGVCIKTLTGHEHEVFSVAFHPDGETLASASGDKTIKLWDIQDGTCLQTLTGHTDWVRCVAFSPDGNTLASSAADHTIKLWDVSQGKCLRTLKSHTGWVRSVAFSADGQTLASGSGDRTIKIWNYHTGECLKTYIGHTNSVYSIAYSPDSKILVSGSGDRTIKLWDCQTHICIKTLHGHTNEVCSVAFSPDGQTLACVSLDQSVRLWNCRTGQCLKAWYGNTDWALPVAFSPDRQILASGSNDKTVKLWDWQTGKYISSLEGHTDFIYGIAFSPDSQTLASASTDSSVRLWNISTGQCFQILLEHTDWVYAVVFHPQGKIIATGSADCTVKLWNISTGQCLKTLSEHSDKILGMAWSPDGQLLASASADQSVRLWDCCTGRCVGILRGHSNRVYSAIFSPNGEIIATCSTDQTVKIWDWQQGKCLKTLTGHTNWVFDIAFSPDGKILASASHDQTVRIWDVNTGKCHHICIGHTHLVSSVAFSPDGEVVASGSQDQTVRIWNVKTGECLQILRAKRLYEGMNITGVTGLTKATIFTLQALGALR.

Residues 55-93 form a WD 1 repeat; sequence ELASEILGVCWQENGVLAAGISEGTWKRFLAGKQAINAE. Residues 112 to 128 show a composition bias toward basic and acidic residues; sequence GGRTKERKDTGTSRQEK. Residues 112 to 138 form a disordered region; sequence GGRTKERKDTGTSRQEKFLSSSHPHTD. 14 WD repeats span residues 640 to 679, 682 to 721, 724 to 763, 766 to 807, 809 to 849, 850 to 889, 892 to 931, 934 to 975, 976 to 1017, 1019 to 1059, 1060 to 1101, 1103 to 1143, 1144 to 1183, and 1186 to 1227; these read ETLG…LLLI, GHSN…CIKT, GHEH…CLQT, GHTD…RTLK, HTGW…KTYI, GHTN…CIKT, GHTN…CLKA, GNTD…SSLE, GHTD…QILL, HTDW…KTLS, EHSD…GILR, HSNR…KTLT, GHTN…CHHI, and GHTH…QILR.

This is an uncharacterized protein from Nostoc sp. (strain PCC 7120 / SAG 25.82 / UTEX 2576).